A 223-amino-acid chain; its full sequence is Cytidylate kinase (223 aa).

Residue 10 to 18 coordinates ATP; the sequence is GPASSGKST.

The protein belongs to the cytidylate kinase family. Type 1 subfamily.

The protein resides in the cytoplasm. It carries out the reaction CMP + ATP = CDP + ADP. It catalyses the reaction dCMP + ATP = dCDP + ADP. This is Cytidylate kinase from Streptococcus pneumoniae (strain Taiwan19F-14).